The primary structure comprises 487 residues: N-succinylglutamate 5-semialdehyde dehydrogenase (487 aa).

An NAD(+)-binding site is contributed by Gly-221–Gly-226. Active-site residues include Glu-244 and Cys-278.

It belongs to the aldehyde dehydrogenase family. AstD subfamily.

The catalysed reaction is N-succinyl-L-glutamate 5-semialdehyde + NAD(+) + H2O = N-succinyl-L-glutamate + NADH + 2 H(+). The protein operates within amino-acid degradation; L-arginine degradation via AST pathway; L-glutamate and succinate from L-arginine: step 4/5. Functionally, catalyzes the NAD-dependent reduction of succinylglutamate semialdehyde into succinylglutamate. The sequence is that of N-succinylglutamate 5-semialdehyde dehydrogenase (astD) from Pseudomonas aeruginosa (strain ATCC 15692 / DSM 22644 / CIP 104116 / JCM 14847 / LMG 12228 / 1C / PRS 101 / PAO1).